We begin with the raw amino-acid sequence, 258 residues long: Development-specific 25 kDa protein (258 aa).

Residue 10-34 coordinates NAD(+); it reads VYVGGFSGFGYQVCQMMMKKPMKHL. S138 lines the substrate pocket. Y151 acts as the Proton acceptor in catalysis.

The protein belongs to the short-chain dehydrogenases/reductases (SDR) family.

The polypeptide is Development-specific 25 kDa protein (Sarcophaga peregrina (Flesh fly)).